Consider the following 975-residue polypeptide: NLR family member X1 (975 aa).

The transit peptide at 1–86 directs the protein to the mitochondrion; the sequence is MRWGHHLPRA…EAIQRHRRNL (86 aa). The required for interaction with MAVS stretch occupies residues 75-556; that stretch reads ATEAIQRHRR…RALPLLFNLI (482 aa). An NACHT domain is found at 160–483; that stretch reads QTVVLYGTVG…LRFFLAPCVE (324 aa). An ATP-binding site is contributed by 166-173; sequence GTVGTGKS. The tract at residues 556-974 is required for the repression of MAVS-induced interferon signaling; that stretch reads IKVVPRVFGR…ALLEQLGSSG (419 aa). The LRRNT domain occupies 667–694; sequence RQVLPPSELLDHLFFHYEFQNQRFSAEV. LRR repeat units follow at residues 695-718, 724-747, 749-777, 778-801, 811-834, 835-857, 858-877, and 878-899; these read LSSLRQLNLAGVRMTPVKCTVVAA, RHALDEVNLASCQLDPAGLRTLLP, FLRARKLGLQLNSLGPEACKDLRDLLLHD, QCQITTLRLSNNPLTAAGVAVLME, HLSLLHTGLGDEGLELLAAQLDRN, RQLQELNVAYNGAGDTAALALAR, AAREHPSLELLHLYFNELSS, and EGRQVLRDLGGAAEGGARVVVS. An LRRCT domain is found at 906–970; it reads VSEYWSVILS…GEVRALLEQL (65 aa).

This sequence belongs to the NLRP family. As to quaternary structure, homohexamer. Interacts with MAVS. Interacts with TUFM. In terms of assembly, (Microbial infection) Interacts with influenza A virus protein PB1-F2. In terms of tissue distribution, ubiquitously expressed. Strongest expression in mammary gland, heart and muscle. Detected in HeLa, HEK293T, THP-1, HL-60, Raji and Jurkat cell lines (at protein level).

It localises to the mitochondrion outer membrane. Its function is as follows. Participates in antiviral signaling. Acts as a negative regulator of MAVS-mediated antiviral responses, through the inhibition of the virus-induced RLH (RIG-like helicase)-MAVS interaction. Instead, promotes autophagy by interacting with TUFM and subsequently recruiting the autophagy-related proteins ATG5 and ATG12. Also regulates MAVS-dependent NLRP3 inflammasome activation to attenuate apoptosis. Has no inhibitory function on NF-kappa-B signaling pathway, but enhances NF-kappa-B and JUN N-terminal kinase dependent signaling through the production of reactive oxygen species. Regulates viral mediated-inflammation and energy metabolism in a sex-dependent manner. In females, prevents uncontrolled inflammation and energy metabolism and thus, may contribute to the sex differences observed in infectious and inflammatory diseases. The protein is NLR family member X1 (NLRX1) of Homo sapiens (Human).